Here is a 255-residue protein sequence, read N- to C-terminus: 4-hydroxy-tetrahydrodipicolinate reductase (255 aa).

Residues 8–13, 88–90, and 112–115 contribute to the NAD(+) site; these read GANGRV, GTT, and ATNM. H144 acts as the Proton donor/acceptor in catalysis. H145 provides a ligand contact to (S)-2,3,4,5-tetrahydrodipicolinate. Residue K148 is the Proton donor of the active site. 154–155 serves as a coordination point for (S)-2,3,4,5-tetrahydrodipicolinate; it reads GT.

This sequence belongs to the DapB family.

It is found in the cytoplasm. It catalyses the reaction (S)-2,3,4,5-tetrahydrodipicolinate + NAD(+) + H2O = (2S,4S)-4-hydroxy-2,3,4,5-tetrahydrodipicolinate + NADH + H(+). The catalysed reaction is (S)-2,3,4,5-tetrahydrodipicolinate + NADP(+) + H2O = (2S,4S)-4-hydroxy-2,3,4,5-tetrahydrodipicolinate + NADPH + H(+). Its pathway is amino-acid biosynthesis; L-lysine biosynthesis via DAP pathway; (S)-tetrahydrodipicolinate from L-aspartate: step 4/4. Functionally, catalyzes the conversion of 4-hydroxy-tetrahydrodipicolinate (HTPA) to tetrahydrodipicolinate. This Sulfurimonas denitrificans (strain ATCC 33889 / DSM 1251) (Thiomicrospira denitrificans (strain ATCC 33889 / DSM 1251)) protein is 4-hydroxy-tetrahydrodipicolinate reductase.